The primary structure comprises 383 residues: MDFNLTDIQQDFLKLAHDFGEKKLAPTVTERDHKGIYDKELIDELLSLGITGAYFEEKYGGSGDDGGDVLSYILAVEELAKYDAGVAITLSATVSLCANPIWQFGTEAQKEKFLVPLVEGTKLGAFGLTEPNAGTDASGQQTIATKNDDGTYTLNGSKIFITNGGAADIYIVFAMTDKSKGNHGITAFILEDGTPGFTYGKKEDKMGIHTSQTMELVFQDVKVPAENMLGEEGKGFKIAMMTLDGGRIGVAAQALGIAEAALADAVEYSKQRVQFGKPLCKFQSISFKLADMKMQIEAARNLVYKAACKKQEGKPFTVDAAIAKRVASDVAMRVTTEAVQIFGGYGYSEEYPVARHMRDAKITQIYEGTNEVQLMVTGGALLR.

The active-site Proton acceptor is the Glu-367.

The protein belongs to the acyl-CoA dehydrogenase family. As to quaternary structure, homotetramer. The cofactor is FAD.

The catalysed reaction is butanoyl-CoA + oxidized [electron-transfer flavoprotein] + H(+) = (2E)-butenoyl-CoA + reduced [electron-transfer flavoprotein]. It catalyses the reaction a short-chain 2,3-saturated fatty acyl-CoA + oxidized [electron-transfer flavoprotein] + H(+) = a short-chain (2E)-enoyl-CoA + reduced [electron-transfer flavoprotein]. Functionally, has an optimum specificity for 4-carbon length fatty acyl-CoAs. This chain is Acyl-CoA dehydrogenase, short-chain specific, found in Megasphaera elsdenii.